The primary structure comprises 1133 residues: Lysylphosphatidylglycerol biosynthesis bifunctional protein LysX (1133 aa).

Residues 1–626 form a phosphatidylglycerol lysyltransferase region; the sequence is MTTVDASPGI…LLHHDGSTPD (626 aa). The next 7 helical transmembrane spans lie at 43-63, 82-102, 109-129, 140-160, 177-197, 233-253, and 575-595; these read VPAA…IASV, LFNF…LAAA, IAWL…AVDM, FGEN…VLSY, AVLV…VELF, LNAI…IVLF, and LIPR…LPFS. A lysine--tRNA ligase region spans residues 627 to 1133; that stretch reads VSGLQTADVD…TLPFPLAKPH (507 aa). Mg(2+) is bound by residues aspartate 1045 and glutamate 1052.

It in the N-terminal section; belongs to the LPG synthetase family. The protein in the C-terminal section; belongs to the class-II aminoacyl-tRNA synthetase family. It depends on Mg(2+) as a cofactor.

It is found in the cell membrane. The enzyme catalyses tRNA(Lys) + L-lysine + ATP = L-lysyl-tRNA(Lys) + AMP + diphosphate. It catalyses the reaction L-lysyl-tRNA(Lys) + a 1,2-diacyl-sn-glycero-3-phospho-(1'-sn-glycerol) = a 1,2-diacyl-sn-glycero-3-phospho-1'-(3'-O-L-lysyl)-sn-glycerol + tRNA(Lys). Its function is as follows. Catalyzes the production of L-lysyl-tRNA(Lys)transfer and the transfer of a lysyl group from L-lysyl-tRNA(Lys) to membrane-bound phosphatidylglycerol (PG), which produces lysylphosphatidylglycerol (LPG), one of the components of the bacterial membrane with a positive net charge. LPG synthesis contributes to the resistance to cationic antimicrobial peptides (CAMPs) and likely protects M.tuberculosis against the CAMPs produced by competiting microorganisms (bacteriocins). In fact, the modification of anionic phosphatidylglycerol with positively charged L-lysine results in repulsion of the peptides. This Mycobacterium leprae (strain Br4923) protein is Lysylphosphatidylglycerol biosynthesis bifunctional protein LysX (lysX).